The chain runs to 257 residues: Major prion protein (257 aa).

Residues 1 to 24 (MVKSHIGGWILVLFVAAWSDIGLC) form the signal peptide. Residues 25-234 (KKRPKPGGGW…EYEAYAQRGA (210 aa)) are interaction with GRB2, ERI3 and SYN1. Residues 28 to 113 (PKPGGGWNTG…NKPSKPKTNM (86 aa)) form a disordered region. Tandem repeats lie at residues 54–62 (PQGGGGWGQ), 63–70 (PHGGGWGQ), 71–78 (PHGGGWGQ), 79–86 (PHGGGWGQ), and 87–95 (PHGGGGWGQ). The segment at 54 to 95 (PQGGGGWGQPHGGGWGQPHGGGWGQPHGGGWGQPHGGGGWGQ) is 5 X 8 AA tandem repeats of P-H-G-G-G-W-G-Q. Residues 55–100 (QGGGGWGQPHGGGWGQPHGGGWGQPHGGGWGQPHGGGGWGQGGGSH) show a composition bias toward gly residues. Residues His-64, Gly-65, Gly-66, His-72, Gly-73, Gly-74, His-80, Gly-81, Gly-82, His-88, Gly-90, and Gly-91 each coordinate Cu(2+). A disulfide bond links Cys-183 and Cys-218. Residues Asn-185 and Asn-201 are each glycosylated (N-linked (GlcNAc...) asparagine). Ala-234 is lipidated: GPI-anchor amidated alanine. The propeptide at 235-257 (SVILFSSPPVILLISFLLFLIVG) is removed in mature form.

Belongs to the prion family. In terms of assembly, monomer and homodimer. Has a tendency to aggregate into amyloid fibrils containing a cross-beta spine, formed by a steric zipper of superposed beta-strands. Soluble oligomers may represent an intermediate stage on the path to fibril formation. Copper binding may promote oligomerization. Interacts with GRB2, APP, ERI3/PRNPIP and SYN1. Mislocalized cytosolically exposed PrP interacts with MGRN1; this interaction alters MGRN1 subcellular location and causes lysosomal enlargement. Interacts with KIAA1191.

The protein localises to the cell membrane. The protein resides in the golgi apparatus. Its primary physiological function is unclear. Has cytoprotective activity against internal or environmental stresses. May play a role in neuronal development and synaptic plasticity. May be required for neuronal myelin sheath maintenance. May play a role in iron uptake and iron homeostasis. Soluble oligomers are toxic to cultured neuroblastoma cells and induce apoptosis (in vitro). Association with GPC1 (via its heparan sulfate chains) targets PRNP to lipid rafts. Also provides Cu(2+) or Zn(2+) for the ascorbate-mediated GPC1 deaminase degradation of its heparan sulfate side chains. This chain is Major prion protein (PRNP), found in Sus scrofa (Pig).